The sequence spans 239 residues: Eukaryotic translation initiation factor 6 (239 aa).

It belongs to the eIF-6 family. In terms of assembly, monomer. Associates with the 60S ribosomal subunit.

The protein localises to the cytoplasm. The protein resides in the nucleus. It is found in the nucleolus. Functionally, binds to the 60S ribosomal subunit and prevents its association with the 40S ribosomal subunit to form the 80S initiation complex in the cytoplasm. May also be involved in ribosome biogenesis. The protein is Eukaryotic translation initiation factor 6 of Entamoeba dispar (strain ATCC PRA-260 / SAW760).